We begin with the raw amino-acid sequence, 428 residues long: Spermidine/putrescine import ATP-binding protein PotA (428 aa).

Residues Ile6–Ile238 enclose the ABC transporter domain. Gly40–Ser47 provides a ligand contact to ATP.

The protein belongs to the ABC transporter superfamily. Spermidine/putrescine importer (TC 3.A.1.11.1) family. In terms of assembly, the complex is composed of two ATP-binding proteins (PotA), two transmembrane proteins (PotB and PotC) and a solute-binding protein (PotD).

It is found in the cell membrane. The catalysed reaction is ATP + H2O + polyamine-[polyamine-binding protein]Side 1 = ADP + phosphate + polyamineSide 2 + [polyamine-binding protein]Side 1.. Its function is as follows. Part of the ABC transporter complex PotABCD involved in spermidine/putrescine import. Responsible for energy coupling to the transport system. The chain is Spermidine/putrescine import ATP-binding protein PotA from Lactococcus lactis subsp. lactis (strain IL1403) (Streptococcus lactis).